Consider the following 99-residue polypeptide: Transcriptional regulator WhiB2 (99 aa).

The 4Fe-4S Wbl-type domain occupies 33 to 90 (LCAQTDPEAFFPEKGGSTRDAKRVCAKCEVREQCLKWAIDHDERFGIWGGMSERERRR). Residues C34, C57, C60, and C66 each contribute to the [4Fe-4S] cluster site.

This sequence belongs to the WhiB family. It depends on [4Fe-4S] cluster as a cofactor. Post-translationally, the Fe-S cluster can be nitrosylated by nitric oxide (NO). In terms of processing, upon Fe-S cluster removal intramolecular disulfide bonds are formed.

The protein resides in the cytoplasm. In terms of biological role, acts as a transcriptional regulator. Probably redox-responsive. The apo- but not holo-form probably binds DNA. This chain is Transcriptional regulator WhiB2 (whiB2), found in Bifidobacterium longum (strain NCC 2705).